The chain runs to 254 residues: 3-deoxy-manno-octulosonate cytidylyltransferase (254 aa).

Belongs to the KdsB family.

The protein resides in the cytoplasm. The enzyme catalyses 3-deoxy-alpha-D-manno-oct-2-ulosonate + CTP = CMP-3-deoxy-beta-D-manno-octulosonate + diphosphate. It functions in the pathway nucleotide-sugar biosynthesis; CMP-3-deoxy-D-manno-octulosonate biosynthesis; CMP-3-deoxy-D-manno-octulosonate from 3-deoxy-D-manno-octulosonate and CTP: step 1/1. Its pathway is bacterial outer membrane biogenesis; lipopolysaccharide biosynthesis. In terms of biological role, activates KDO (a required 8-carbon sugar) for incorporation into bacterial lipopolysaccharide in Gram-negative bacteria. This Haemophilus influenzae (strain PittGG) protein is 3-deoxy-manno-octulosonate cytidylyltransferase.